Reading from the N-terminus, the 249-residue chain is 5'-nucleotidase SurE 2 (249 aa).

Residues D8, D9, S40, and N90 each contribute to the a divalent metal cation site.

Belongs to the SurE nucleotidase family. The cofactor is a divalent metal cation.

The protein localises to the cytoplasm. The catalysed reaction is a ribonucleoside 5'-phosphate + H2O = a ribonucleoside + phosphate. In terms of biological role, nucleotidase that shows phosphatase activity on nucleoside 5'-monophosphates. The protein is 5'-nucleotidase SurE 2 of Pyrobaculum aerophilum (strain ATCC 51768 / DSM 7523 / JCM 9630 / CIP 104966 / NBRC 100827 / IM2).